The primary structure comprises 250 residues: 3-deoxy-manno-octulosonate cytidylyltransferase (250 aa).

This sequence belongs to the KdsB family.

It localises to the cytoplasm. It carries out the reaction 3-deoxy-alpha-D-manno-oct-2-ulosonate + CTP = CMP-3-deoxy-beta-D-manno-octulosonate + diphosphate. The protein operates within nucleotide-sugar biosynthesis; CMP-3-deoxy-D-manno-octulosonate biosynthesis; CMP-3-deoxy-D-manno-octulosonate from 3-deoxy-D-manno-octulosonate and CTP: step 1/1. Its pathway is bacterial outer membrane biogenesis; lipopolysaccharide biosynthesis. Functionally, activates KDO (a required 8-carbon sugar) for incorporation into bacterial lipopolysaccharide in Gram-negative bacteria. In Legionella pneumophila subsp. pneumophila (strain Philadelphia 1 / ATCC 33152 / DSM 7513), this protein is 3-deoxy-manno-octulosonate cytidylyltransferase.